Here is a 228-residue protein sequence, read N- to C-terminus: Putative N-acetylmannosamine-6-phosphate 2-epimerase (228 aa).

This sequence belongs to the NanE family.

It carries out the reaction an N-acyl-D-glucosamine 6-phosphate = an N-acyl-D-mannosamine 6-phosphate. The protein operates within amino-sugar metabolism; N-acetylneuraminate degradation; D-fructose 6-phosphate from N-acetylneuraminate: step 3/5. Functionally, converts N-acetylmannosamine-6-phosphate (ManNAc-6-P) to N-acetylglucosamine-6-phosphate (GlcNAc-6-P). The sequence is that of Putative N-acetylmannosamine-6-phosphate 2-epimerase from Lactiplantibacillus plantarum (strain ATCC BAA-793 / NCIMB 8826 / WCFS1) (Lactobacillus plantarum).